Reading from the N-terminus, the 149-residue chain is MADQLTEEQIAEFKEAFSLFDKDGDGTITTKELGTVMRSLGQNPTEAELQDMINEVDADGNGTIDFPEFLTMMARKMKDTDSEEEIREAFRVFDKDGNGFISAAELRHVMTNLGEKLTDEEVDEMIREADIDGDGQVNYEEFVKMMTSK.

Alanine 2 is subject to N-acetylalanine. EF-hand domains follow at residues 8–43 (EQIA…LGQN), 44–79 (PTEA…KMKD), 81–116 (DSEE…LGEK), and 117–149 (LTDE…MTSK). 14 residues coordinate Ca(2+): aspartate 21, aspartate 23, aspartate 25, threonine 27, glutamate 32, aspartate 57, aspartate 59, asparagine 61, threonine 63, glutamate 68, aspartate 94, aspartate 96, asparagine 98, and glutamate 105. Lysine 116 carries the post-translational modification N6,N6,N6-trimethyllysine. Ca(2+) is bound by residues aspartate 130, aspartate 132, aspartate 134, glutamine 136, and glutamate 141.

This sequence belongs to the calmodulin family.

Functionally, calmodulin mediates the control of a large number of enzymes, ion channels and other proteins by Ca(2+). Among the enzymes to be stimulated by the calmodulin-Ca(2+) complex are a number of protein kinases and phosphatases. In Metridium senile (Brown sea anemone), this protein is Calmodulin.